We begin with the raw amino-acid sequence, 392 residues long: Anhydro-N-acetylmuramic acid kinase (392 aa).

ATP is bound at residue G19 to D26.

This sequence belongs to the anhydro-N-acetylmuramic acid kinase family.

The catalysed reaction is 1,6-anhydro-N-acetyl-beta-muramate + ATP + H2O = N-acetyl-D-muramate 6-phosphate + ADP + H(+). The protein operates within amino-sugar metabolism; 1,6-anhydro-N-acetylmuramate degradation. It functions in the pathway cell wall biogenesis; peptidoglycan recycling. Its function is as follows. Catalyzes the specific phosphorylation of 1,6-anhydro-N-acetylmuramic acid (anhMurNAc) with the simultaneous cleavage of the 1,6-anhydro ring, generating MurNAc-6-P. Is required for the utilization of anhMurNAc either imported from the medium or derived from its own cell wall murein, and thus plays a role in cell wall recycling. In Trichormus variabilis (strain ATCC 29413 / PCC 7937) (Anabaena variabilis), this protein is Anhydro-N-acetylmuramic acid kinase.